Consider the following 199-residue polypeptide: Pyridoxine/pyridoxamine 5'-phosphate oxidase (199 aa).

Residues 44-49 (RTVLLK), 59-60 (YT), Lys66, and Gln91 contribute to the FMN site. Residue Lys49 participates in substrate binding. Tyr109, Arg113, and Ser117 together coordinate substrate. FMN-binding positions include 126-127 (QS) and Trp171. Residue 177 to 179 (RLH) coordinates substrate. Arg181 is a binding site for FMN.

It belongs to the pyridoxamine 5'-phosphate oxidase family. In terms of assembly, homodimer. FMN serves as cofactor.

The enzyme catalyses pyridoxamine 5'-phosphate + O2 + H2O = pyridoxal 5'-phosphate + H2O2 + NH4(+). The catalysed reaction is pyridoxine 5'-phosphate + O2 = pyridoxal 5'-phosphate + H2O2. The protein operates within cofactor metabolism; pyridoxal 5'-phosphate salvage; pyridoxal 5'-phosphate from pyridoxamine 5'-phosphate: step 1/1. It functions in the pathway cofactor metabolism; pyridoxal 5'-phosphate salvage; pyridoxal 5'-phosphate from pyridoxine 5'-phosphate: step 1/1. In terms of biological role, catalyzes the oxidation of either pyridoxine 5'-phosphate (PNP) or pyridoxamine 5'-phosphate (PMP) into pyridoxal 5'-phosphate (PLP). This Xanthomonas euvesicatoria pv. vesicatoria (strain 85-10) (Xanthomonas campestris pv. vesicatoria) protein is Pyridoxine/pyridoxamine 5'-phosphate oxidase.